We begin with the raw amino-acid sequence, 213 residues long: MDIAGYLSFFFASFTTLFIIIDPPGNLPIFIALTERFSDEYREKISKRATIIAFLILFITMVTGGKILDYFGVSISSLKIAGGILLFISSVDILLGGTRREAYKRRAEESIDVDSIAVFPLALPLYTGPGAITAGIVLYSQAGDVVMKLLVVLSAALVYSIVRLSHIYSAPIIRLLGRSGADIAARILAIFLAAIAVEFVFDGLAEKLVSMDL.

Transmembrane regions (helical) follow at residues 1–21, 51–71, 75–95, 118–138, 142–162, and 181–201; these read MDIA…FIII, IIAF…LDYF, ISSL…DILL, VFPL…GIVL, AGDV…YSIV, and ADIA…EFVF.

It belongs to the UPF0056 (MarC) family.

It is found in the cell membrane. The protein is UPF0056 membrane protein AF_2111 of Archaeoglobus fulgidus (strain ATCC 49558 / DSM 4304 / JCM 9628 / NBRC 100126 / VC-16).